A 120-amino-acid chain; its full sequence is Large ribosomal subunit protein uL18 (120 aa).

Belongs to the universal ribosomal protein uL18 family. In terms of assembly, part of the 50S ribosomal subunit; part of the 5S rRNA/L5/L18/L25 subcomplex. Contacts the 5S and 23S rRNAs.

Functionally, this is one of the proteins that bind and probably mediate the attachment of the 5S RNA into the large ribosomal subunit, where it forms part of the central protuberance. This Bacillus cytotoxicus (strain DSM 22905 / CIP 110041 / 391-98 / NVH 391-98) protein is Large ribosomal subunit protein uL18.